The following is a 268-amino-acid chain: Glutamate racemase (268 aa).

Substrate is bound by residues 14-15 and 46-47; these read DS and YG. Residue Cys78 is the Proton donor/acceptor of the active site. 79–80 contacts substrate; it reads NT. Residue Cys192 is the Proton donor/acceptor of the active site. Substrate is bound at residue 193–194; it reads TH.

The protein belongs to the aspartate/glutamate racemases family.

The catalysed reaction is L-glutamate = D-glutamate. It functions in the pathway cell wall biogenesis; peptidoglycan biosynthesis. In terms of biological role, provides the (R)-glutamate required for cell wall biosynthesis. The polypeptide is Glutamate racemase (Sphingopyxis alaskensis (strain DSM 13593 / LMG 18877 / RB2256) (Sphingomonas alaskensis)).